We begin with the raw amino-acid sequence, 259 residues long: DNA adenine methylase (259 aa).

Positions 7, 11, 50, and 171 each coordinate S-adenosyl-L-methionine.

Belongs to the N(4)/N(6)-methyltransferase family. As to quaternary structure, monomer.

The enzyme catalyses a 2'-deoxyadenosine in DNA + S-adenosyl-L-methionine = an N(6)-methyl-2'-deoxyadenosine in DNA + S-adenosyl-L-homocysteine + H(+). Its function is as follows. An alpha subtpe methyltransferase that recognizes the double-stranded sequence 5'-GATC-3' and methylates A-2 on both strands. May prevent degradation of viral DNA by the host restriction-modification antiviral defense system. This Enterobacteria phage T2 (Bacteriophage T2) protein is DNA adenine methylase.